A 362-amino-acid chain; its full sequence is Chorismate synthase (362 aa).

2 residues coordinate NADP(+): Arg47 and Arg53. Residues 124-126 (RSS), Gly285, 300-304 (KPTAT), and Arg326 each bind FMN.

Belongs to the chorismate synthase family. In terms of assembly, homotetramer. It depends on FMNH2 as a cofactor.

The enzyme catalyses 5-O-(1-carboxyvinyl)-3-phosphoshikimate = chorismate + phosphate. It participates in metabolic intermediate biosynthesis; chorismate biosynthesis; chorismate from D-erythrose 4-phosphate and phosphoenolpyruvate: step 7/7. Functionally, catalyzes the anti-1,4-elimination of the C-3 phosphate and the C-6 proR hydrogen from 5-enolpyruvylshikimate-3-phosphate (EPSP) to yield chorismate, which is the branch point compound that serves as the starting substrate for the three terminal pathways of aromatic amino acid biosynthesis. This reaction introduces a second double bond into the aromatic ring system. This chain is Chorismate synthase, found in Cyanothece sp. (strain PCC 7425 / ATCC 29141).